A 90-amino-acid chain; its full sequence is Probable Fe(2+)-trafficking protein (90 aa).

This sequence belongs to the Fe(2+)-trafficking protein family.

Could be a mediator in iron transactions between iron acquisition and iron-requiring processes, such as synthesis and/or repair of Fe-S clusters in biosynthetic enzymes. This chain is Probable Fe(2+)-trafficking protein, found in Albidiferax ferrireducens (strain ATCC BAA-621 / DSM 15236 / T118) (Rhodoferax ferrireducens).